The chain runs to 256 residues: tRNA pseudouridine synthase A 1 (256 aa).

The Nucleophile role is filled by aspartate 53. Substrate is bound at residue tyrosine 111.

The protein belongs to the tRNA pseudouridine synthase TruA family. In terms of assembly, homodimer.

It carries out the reaction uridine(38/39/40) in tRNA = pseudouridine(38/39/40) in tRNA. Functionally, formation of pseudouridine at positions 38, 39 and 40 in the anticodon stem and loop of transfer RNAs. In Protochlamydia amoebophila (strain UWE25), this protein is tRNA pseudouridine synthase A 1.